Reading from the N-terminus, the 248-residue chain is UPF0736 protein BC_1176 (248 aa).

Belongs to the UPF0736 family.

This is UPF0736 protein BC_1176 from Bacillus cereus (strain ATCC 14579 / DSM 31 / CCUG 7414 / JCM 2152 / NBRC 15305 / NCIMB 9373 / NCTC 2599 / NRRL B-3711).